The sequence spans 119 residues: Large ribosomal subunit protein uL18 (119 aa).

Belongs to the universal ribosomal protein uL18 family. In terms of assembly, part of the 50S ribosomal subunit; part of the 5S rRNA/L5/L18/L25 subcomplex. Contacts the 5S and 23S rRNAs.

Functionally, this is one of the proteins that bind and probably mediate the attachment of the 5S RNA into the large ribosomal subunit, where it forms part of the central protuberance. This is Large ribosomal subunit protein uL18 from Anaeromyxobacter sp. (strain Fw109-5).